The following is a 258-amino-acid chain: UPF0246 protein Sfri_2896 (258 aa).

The protein belongs to the UPF0246 family.

In Shewanella frigidimarina (strain NCIMB 400), this protein is UPF0246 protein Sfri_2896.